A 116-amino-acid polypeptide reads, in one-letter code: Protein Rev (116 aa).

Ser5 and Ser8 each carry phosphoserine; by host CK2. The homomultimerization stretch occupies residues 18-26 (LIKFLYQSN). The tract at residues 23–48 (YQSNPPPNPEGTRQARRNRRRRWRER) is disordered. Positions 34–50 (TRQARRNRRRRWRERQR) match the Nuclear localization signal and RNA-binding (RRE) motif. The segment covering 36 to 48 (QARRNRRRRWRER) has biased composition (basic residues). Residues 73 to 84 (LQLPPLERLNLD) carry the Nuclear export signal and binding to XPO1 motif. Positions 90 to 116 (GTSGTQGVGSPEILVESPAVLEPGTKE) are disordered. Phosphoserine; by host is present on residues Ser92 and Ser99.

Belongs to the HIV-1 REV protein family. Homomultimer; when bound to the RRE. Multimeric assembly is essential for activity and may involve XPO1. Binds to human KPNB1, XPO1, TNPO1, RANBP5 and IPO7. Interacts with the viral Integrase. Interacts with human KHDRBS1. Interacts with human NAP1; this interaction decreases Rev multimerization and stimulates its activity. Interacts with human DEAD-box helicases DDX3 and DDX24; these interactions may serve for viral RNA export to the cytoplasm and packaging, respectively. Interacts with human PSIP1; this interaction may inhibit HIV-1 DNA integration by promoting dissociation of the Integrase-LEDGF/p75 complex. Asymmetrically arginine dimethylated at one site by host PRMT6. Methylation impairs the RNA-binding activity and export of viral RNA from the nucleus to the cytoplasm. Post-translationally, phosphorylated by protein kinase CK2. Presence of, and maybe binding to the N-terminus of the regulatory beta subunit of CK2 is necessary for CK2-mediated Rev's phosphorylation.

It is found in the host nucleus. The protein resides in the host nucleolus. It localises to the host cytoplasm. Functionally, escorts unspliced or incompletely spliced viral pre-mRNAs (late transcripts) out of the nucleus of infected cells. These pre-mRNAs carry a recognition sequence called Rev responsive element (RRE) located in the env gene, that is not present in fully spliced viral mRNAs (early transcripts). This function is essential since most viral proteins are translated from unspliced or partially spliced pre-mRNAs which cannot exit the nucleus by the pathway used by fully processed cellular mRNAs. Rev itself is translated from a fully spliced mRNA that readily exits the nucleus. Rev's nuclear localization signal (NLS) binds directly to KPNB1/Importin beta-1 without previous binding to KPNA1/Importin alpha-1. KPNB1 binds to the GDP bound form of RAN (Ran-GDP) and targets Rev to the nucleus. In the nucleus, the conversion from Ran-GDP to Ran-GTP dissociates Rev from KPNB1 and allows Rev's binding to the RRE in viral pre-mRNAs. Rev multimerization on the RRE via cooperative assembly exposes its nuclear export signal (NES) to the surface. Rev can then form a complex with XPO1/CRM1 and Ran-GTP, leading to nuclear export of the complex. Conversion from Ran-GTP to Ran-GDP mediates dissociation of the Rev/RRE/XPO1/RAN complex, so that Rev can return to the nucleus for a subsequent round of export. Beside KPNB1, also seems to interact with TNPO1/Transportin-1, RANBP5/IPO5 and IPO7/RANBP7 for nuclear import. The nucleoporin-like HRB/RIP is an essential cofactor that probably indirectly interacts with Rev to release HIV RNAs from the perinuclear region to the cytoplasm. The protein is Protein Rev of Human immunodeficiency virus type 1 group M subtype B (isolate OYI) (HIV-1).